The following is a 278-amino-acid chain: Transmembrane protein 45B (278 aa).

Helical transmembrane passes span 7–27, 49–69, 95–115, 117–137, 149–169, 183–203, and 215–235; these read HALP…KYPL, IIEG…EQFV, YLFF…FNIV, LGLD…LFYF, IHSL…LEVI, LLIL…PPFG, and VMFI…ITAI. Phosphoserine is present on residues S273 and S275.

The protein belongs to the TMEM45 family.

It is found in the endosome membrane. Its subcellular location is the lysosome membrane. It localises to the golgi apparatus. The protein resides in the trans-Golgi network membrane. Plays a role in innate immunity. The sequence is that of Transmembrane protein 45B (Tmem45b) from Rattus norvegicus (Rat).